Reading from the N-terminus, the 89-residue chain is DNA/RNA-binding protein Alba (89 aa).

It belongs to the histone-like Alba family.

It localises to the cytoplasm. Its subcellular location is the chromosome. In terms of biological role, binds double-stranded DNA tightly but without sequence specificity. Involved in DNA compaction. The protein is DNA/RNA-binding protein Alba of Methanothrix thermoacetophila (strain DSM 6194 / JCM 14653 / NBRC 101360 / PT) (Methanosaeta thermophila).